The sequence spans 258 residues: MAAPAPGLISVFSSSQELGAALAQLVAQRAACCLAGARARFALGLSGGSLVSMLARELPAAVAPAGPASLARWTLGFCDERLVPFDHAESTYGLYRTHLLSRLPIPESQVITINPELPVEEAAEDYAKKLRQAFQGDSIPVFDLLILGVGPDGHTCSLFPDHPLLQEREKIVAPISDSPKPPPQRVTLTLPVLNAARTVIFVATGEGKAAVLKRILEDQEENPLPAALVQPHTGKLCWFLDEAAARLLTVPFEKHSTL.

Ala2 bears the N-acetylalanine mark. Phosphoserine is present on Ser49. The residue at position 180 (Lys180) is an N6-acetyllysine.

This sequence belongs to the glucosamine/galactosamine-6-phosphate isomerase family. 6-phosphogluconolactonase subfamily.

The protein localises to the cytoplasm. The enzyme catalyses 6-phospho-D-glucono-1,5-lactone + H2O = 6-phospho-D-gluconate + H(+). It participates in carbohydrate degradation; pentose phosphate pathway; D-ribulose 5-phosphate from D-glucose 6-phosphate (oxidative stage): step 2/3. In terms of biological role, hydrolysis of 6-phosphogluconolactone to 6-phosphogluconate. This chain is 6-phosphogluconolactonase, found in Homo sapiens (Human).